A 251-amino-acid chain; its full sequence is Triosephosphate isomerase (251 aa).

Residue asparagine 9–lysine 11 coordinates substrate. Histidine 95 functions as the Electrophile in the catalytic mechanism. Glutamate 167 (proton acceptor) is an active-site residue. Residues glycine 173, serine 213, and glycine 234–glycine 235 contribute to the substrate site.

It belongs to the triosephosphate isomerase family. In terms of assembly, homodimer.

Its subcellular location is the cytoplasm. It carries out the reaction D-glyceraldehyde 3-phosphate = dihydroxyacetone phosphate. The protein operates within carbohydrate biosynthesis; gluconeogenesis. It participates in carbohydrate degradation; glycolysis; D-glyceraldehyde 3-phosphate from glycerone phosphate: step 1/1. Involved in the gluconeogenesis. Catalyzes stereospecifically the conversion of dihydroxyacetone phosphate (DHAP) to D-glyceraldehyde-3-phosphate (G3P). This is Triosephosphate isomerase from Geobacter metallireducens (strain ATCC 53774 / DSM 7210 / GS-15).